A 356-amino-acid polypeptide reads, in one-letter code: Ferrochelatase (356 aa).

Positions 214 and 295 each coordinate Fe cation.

Belongs to the ferrochelatase family.

Its subcellular location is the cytoplasm. The catalysed reaction is heme b + 2 H(+) = protoporphyrin IX + Fe(2+). Its pathway is porphyrin-containing compound metabolism; protoheme biosynthesis; protoheme from protoporphyrin-IX: step 1/1. Catalyzes the ferrous insertion into protoporphyrin IX. This chain is Ferrochelatase, found in Paraburkholderia phymatum (strain DSM 17167 / CIP 108236 / LMG 21445 / STM815) (Burkholderia phymatum).